A 219-amino-acid chain; its full sequence is Cyclin-U4-3 (219 aa).

It belongs to the cyclin family. Cyclin U/P subfamily. As to quaternary structure, interacts with CDKA-1. In terms of tissue distribution, expressed at low levels in roots, stems and flowers. Expressed in the shoot apex, leaf primordia and young leaves.

This is Cyclin-U4-3 (CYCU4-3) from Arabidopsis thaliana (Mouse-ear cress).